Consider the following 305-residue polypeptide: Protoheme IX farnesyltransferase (305 aa).

9 helical membrane passes run 31-51 (VMSLVIFTGFVGMWLAPYSVH), 52-72 (PFIAGIAVVCIALGAGSAGAI), 96-118 (VIESDEALSFGLITGFFAVFFMA), 123-145 (LLASFLLLFTIFYYICIYTIWLK), 151-171 (NIVIGGVSGALPPVIGYAAVS), 179-199 (IILFLIIFIWTPPHSWALALF), 225-245 (ILIYSILLFIVSLMPFFIGMN), 247-267 (FIYLIISGILGVVFLYYAGSL), and 281-301 (FAYSIFYLFFIFLLLYSTNTI).

The protein belongs to the UbiA prenyltransferase family. Protoheme IX farnesyltransferase subfamily.

The protein localises to the cell inner membrane. The catalysed reaction is heme b + (2E,6E)-farnesyl diphosphate + H2O = Fe(II)-heme o + diphosphate. The protein operates within porphyrin-containing compound metabolism; heme O biosynthesis; heme O from protoheme: step 1/1. Converts heme B (protoheme IX) to heme O by substitution of the vinyl group on carbon 2 of heme B porphyrin ring with a hydroxyethyl farnesyl side group. In Rickettsia rickettsii (strain Iowa), this protein is Protoheme IX farnesyltransferase.